The following is a 159-amino-acid chain: Phosphopantetheine adenylyltransferase (159 aa).

Residue Thr-10 coordinates substrate. Residues 10–11 (TF) and His-18 contribute to the ATP site. Positions 42, 74, and 88 each coordinate substrate. Residues 89-91 (GLR), Glu-99, and 124-130 (WSFISSS) contribute to the ATP site.

It belongs to the bacterial CoaD family. In terms of assembly, homohexamer. Mg(2+) serves as cofactor.

The protein localises to the cytoplasm. It carries out the reaction (R)-4'-phosphopantetheine + ATP + H(+) = 3'-dephospho-CoA + diphosphate. The protein operates within cofactor biosynthesis; coenzyme A biosynthesis; CoA from (R)-pantothenate: step 4/5. In terms of biological role, reversibly transfers an adenylyl group from ATP to 4'-phosphopantetheine, yielding dephospho-CoA (dPCoA) and pyrophosphate. This is Phosphopantetheine adenylyltransferase from Salmonella arizonae (strain ATCC BAA-731 / CDC346-86 / RSK2980).